The primary structure comprises 533 residues: Retinoid isomerohydrolase (533 aa).

C112 carries S-palmitoyl cysteine; in membrane form lipidation. At S117 the chain carries Phosphoserine. H180 serves as a coordination point for Fe cation. C231 carries S-palmitoyl cysteine; in membrane form lipidation. Residues H241 and H313 each coordinate Fe cation. A lipid anchor (S-palmitoyl cysteine; in membrane form) is attached at C329. Fe cation is bound at residue H527.

Belongs to the carotenoid oxygenase family. Fe(2+) is required as a cofactor. Post-translationally, palmitoylation by LRAT regulates ligand binding specificity; the palmitoylated form (membrane form) specifically binds all-trans-retinyl-palmitate, while the soluble unpalmitoylated form binds all-trans-retinol (vitamin A). In terms of tissue distribution, retinal pigment epithelium specific.

It is found in the cytoplasm. It localises to the cell membrane. Its subcellular location is the microsome membrane. The catalysed reaction is an all-trans-retinyl ester + H2O = 11-cis-retinol + a fatty acid + H(+). It carries out the reaction lutein = (3R,3'S)-zeaxanthin. It catalyses the reaction all-trans-retinyl hexadecanoate + H2O = 11-cis-retinol + hexadecanoate + H(+). Functionally, critical isomerohydrolase in the retinoid cycle involved in regeneration of 11-cis-retinal, the chromophore of rod and cone opsins. Catalyzes the cleavage and isomerization of all-trans-retinyl fatty acid esters to 11-cis-retinol which is further oxidized by 11-cis retinol dehydrogenase to 11-cis-retinal for use as visual chromophore. Essential for the production of 11-cis retinal for both rod and cone photoreceptors. Also capable of catalyzing the isomerization of lutein to meso-zeaxanthin an eye-specific carotenoid. The soluble form binds vitamin A (all-trans-retinol), making it available for LRAT processing to all-trans-retinyl ester. The membrane form, palmitoylated by LRAT, binds all-trans-retinyl esters, making them available for IMH (isomerohydrolase) processing to all-cis-retinol. The soluble form is regenerated by transferring its palmitoyl groups onto 11-cis-retinol, a reaction catalyzed by LRAT. The protein is Retinoid isomerohydrolase (RPE65) of Gallus gallus (Chicken).